Consider the following 168-residue polypeptide: RxLR effector protein PITG_12737 (168 aa).

The signal sequence occupies residues 1-20 (MRACAILVVAAAAVLTGSTA). Positions 54–77 (RRLRKHKTVNTNSEMEYESEAEAR) match the RxLR-dEER motif.

It belongs to the RxLR effector family.

It is found in the secreted. The protein localises to the host nucleus. The protein resides in the host cytoplasm. In terms of biological role, effector that enhances P.infestans colonization of Nicotiana benthamiana leaves. The sequence is that of RxLR effector protein PITG_12737 from Phytophthora infestans (strain T30-4) (Potato late blight agent).